The primary structure comprises 393 residues: Na(+)/H(+) antiporter NhaA (393 aa).

The next 11 membrane-spanning stretches (helical) occupy residues 18–38, 65–85, 101–121, 131–151, 160–180, 184–204, 210–230, 260–280, 298–318, 334–354, and 369–389; these read AGGV…NSPW, MLIW…GLEI, MLPA…YAAI, GWGI…VLLG, VFLT…IAFF, NLSP…LGLN, AVGP…KSGI, ALQP…NAGV, IAFG…WLLI, FFGV…IGSL, and IGVL…LLAS.

It belongs to the NhaA Na(+)/H(+) (TC 2.A.33) antiporter family.

The protein localises to the cell inner membrane. It carries out the reaction Na(+)(in) + 2 H(+)(out) = Na(+)(out) + 2 H(+)(in). In terms of biological role, na(+)/H(+) antiporter that extrudes sodium in exchange for external protons. In Albidiferax ferrireducens (strain ATCC BAA-621 / DSM 15236 / T118) (Rhodoferax ferrireducens), this protein is Na(+)/H(+) antiporter NhaA.